A 272-amino-acid polypeptide reads, in one-letter code: Lyso-glycine lipid O-acyltransferase (272 aa).

This sequence belongs to the O-acyltransferase GlsA family.

The enzyme catalyses a lyso-glycine lipid + a fatty acyl-[ACP] = a glycine lipid + holo-[ACP]. The catalysed reaction is N-[(3R)-3-hydroxyhexadecanoyl]-glycine + hexadecanoyl-[ACP] = N-[(3R)-3-(hexadecanoyloxy)hexadecanoyl]-glycine + holo-[ACP]. The protein operates within lipid metabolism. In terms of biological role, is involved in the production of glycine lipids (GL), which are phosphorus-free membrane lipids important for fitness during growth of the human gut bacterium B.thetaiotaomicron in vivo and in vitro. Catalyzes the second step of GL biosynthesis, i.e. the O-acylation of the hydroxyl group of lyso-glycine lipids, resulting in the production of the mature diacylated glycine lipids. This Bacteroides thetaiotaomicron (strain ATCC 29148 / DSM 2079 / JCM 5827 / CCUG 10774 / NCTC 10582 / VPI-5482 / E50) protein is Lyso-glycine lipid O-acyltransferase.